A 599-amino-acid polypeptide reads, in one-letter code: MDRIAQSDLSLGFGSSHALPLPHPPRIPIADDSITLQIDSSFRPSSNPMPPVPLQLLEQRFDVTGSCSRVVEEDDEVVGDNDDDDQREEEQFILLGHPMKLKRGRGGNSYSLASSSPCKRFVVDSGIESRRAVVRAWGNQSIEEADPEIHEFMEKEKQRQFRGIELIASENFVCRAVMEALGSHLTNKYSEGMPGARYYTGNQYIDQIEILCQERALAAFGLNHEKWGVNVQPYSCTSANFAVFTGLLMPGERIMGLDSPSGGHMSHGYYTPGGKKVSGASIFFESFPYKVDPRTGYIDYDKLEEKALDYRPKILICGGSSYPRDWEFPRFRHIADKCGAVLMFDMAQISGLVAAKESPNPFDYCDIVTSTTHKSLRGPRGGIIFYKRGLKPKKQSINLNHCESNIQYDFEEKINFSVFPSLQGGPHNNHIAALAIALKQAASPEYKLYMRQVKKNAKALASALISRKCKLITGGTDNHLLLWDLTPLGLTGKVYEKVCEMCHITVNKVAIFSENGVISPGGVRIGSPAMTSRGCLEPEFETMADFLYRAAQIASAAQREHGKLQKEPLKSIYHCKEIADLRNQVEAFATQFAMPAFDM.

A disordered region spans residues 1 to 25 (MDRIAQSDLSLGFGSSHALPLPHPP). At Lys-374 the chain carries N6-(pyridoxal phosphate)lysine.

Belongs to the SHMT family. Homotetramer. Pyridoxal 5'-phosphate is required as a cofactor.

It is found in the cytoplasm. It catalyses the reaction (6R)-5,10-methylene-5,6,7,8-tetrahydrofolate + glycine + H2O = (6S)-5,6,7,8-tetrahydrofolate + L-serine. It participates in one-carbon metabolism; tetrahydrofolate interconversion. Its function is as follows. Catalyzes the interconversion of serine and glycine. The protein is Serine hydroxymethyltransferase 6 (SHM6) of Arabidopsis thaliana (Mouse-ear cress).